A 625-amino-acid chain; its full sequence is Alpha-1,3-galactosidase A (625 aa).

Residues 1–32 (MAHGCSGGAMSRFVFLGVALALLGGATSPAAA) form the signal peptide. 5 PbH1 repeats span residues 342-364 (KGKVSITRSLFDGPHDDPINIHG), 460-482 (TPSVVISGNVFRNVPTRGILVTT), 483-505 (RKPVLITGNRFDGMSMASIYVSA), 516-537 (VADLTIRGNSFTRPSGPVIFVE), and 573-611 (VGGFAFTGNTVRRLDGADHPPYTSPLFVFHGSSGIRIAR).

Belongs to the glycosyl hydrolase 110 family. A subfamily.

It carries out the reaction Hydrolysis of terminal, non-reducing branched (1-&gt;3)-alpha-D-galactosidic residues, producing free D-galactose.. It catalyses the reaction Hydrolysis of terminal, non-reducing alpha-D-galactose residues in alpha-D-galactosides, including galactose oligosaccharides, galactomannans and galactolipids.. In terms of biological role, alpha-galactosidase that specifically removes branched alpha-1,3-linked galactose residues present in blood group B antigens. Has no activity toward linear alpha-1,3-linked galactose residues. The sequence is that of Alpha-1,3-galactosidase A (glaA) from Streptomyces avermitilis (strain ATCC 31267 / DSM 46492 / JCM 5070 / NBRC 14893 / NCIMB 12804 / NRRL 8165 / MA-4680).